The following is a 285-amino-acid chain: Probable endonuclease 4 (285 aa).

Residues His-69, His-109, Glu-145, Asp-179, His-182, His-216, Asp-229, His-231, and Glu-261 each contribute to the Zn(2+) site.

The protein belongs to the AP endonuclease 2 family. The cofactor is Zn(2+).

It catalyses the reaction Endonucleolytic cleavage to 5'-phosphooligonucleotide end-products.. Its function is as follows. Endonuclease IV plays a role in DNA repair. It cleaves phosphodiester bonds at apurinic or apyrimidinic (AP) sites, generating a 3'-hydroxyl group and a 5'-terminal sugar phosphate. The protein is Probable endonuclease 4 of Salmonella arizonae (strain ATCC BAA-731 / CDC346-86 / RSK2980).